We begin with the raw amino-acid sequence, 266 residues long: Regulatory protein RecX (266 aa).

The protein belongs to the RecX family.

Its subcellular location is the cytoplasm. Its function is as follows. Modulates RecA activity. In Leuconostoc citreum (strain KM20), this protein is Regulatory protein RecX.